A 290-amino-acid polypeptide reads, in one-letter code: Fructose-1,6-bisphosphatase class 1 (290 aa).

Positions 78, 96, 98, and 99 each coordinate Mg(2+). Substrate contacts are provided by residues 99–102 (DGSS), tyrosine 201, and lysine 226. A Mg(2+)-binding site is contributed by glutamate 232.

It belongs to the FBPase class 1 family. In terms of assembly, homotetramer. Mg(2+) serves as cofactor.

It localises to the cytoplasm. It catalyses the reaction beta-D-fructose 1,6-bisphosphate + H2O = beta-D-fructose 6-phosphate + phosphate. The protein operates within carbohydrate biosynthesis; gluconeogenesis. This is Fructose-1,6-bisphosphatase class 1 from Helicobacter pylori (strain Shi470).